The following is a 244-amino-acid chain: CTD nuclear envelope phosphatase 1 (244 aa).

Residues 7–29 (LLGLRTFVAFAAKLWSFFIYLLR) traverse the membrane as a helical segment. One can recognise an FCP1 homology domain in the interval 57 to 224 (AQVKRKILVL…LNLLPMLDAL (168 aa)).

This sequence belongs to the dullard family. Interacts with CNEP1R1; the complex dephosphorylates LPIN1 and LPIN2. In terms of tissue distribution, muscle specific with lower expression in other metabolic tissues.

It localises to the endoplasmic reticulum membrane. Its subcellular location is the nucleus membrane. The enzyme catalyses O-phospho-L-seryl-[protein] + H2O = L-seryl-[protein] + phosphate. The catalysed reaction is O-phospho-L-threonyl-[protein] + H2O = L-threonyl-[protein] + phosphate. Serine/threonine protein phosphatase forming with CNEP1R1 an active phosphatase complex that dephosphorylates and may activate LPIN1 and LPIN2. LPIN1 and LPIN2 are phosphatidate phosphatases that catalyze the conversion of phosphatidic acid to diacylglycerol and control the metabolism of fatty acids at different levels. May indirectly modulate the lipid composition of nuclear and/or endoplasmic reticulum membranes and be required for proper nuclear membrane morphology and/or dynamics. May also indirectly regulate the production of lipid droplets and triacylglycerol. May antagonize BMP signaling. This Mus musculus (Mouse) protein is CTD nuclear envelope phosphatase 1 (Ctdnep1).